Consider the following 457-residue polypeptide: MIHNKLLIAGSIILNLVFTIHILYNNTSTWSPTWTNRAALEAEAAASVSCSGHGRSYVDGLGVLDGHKPCECHDCYTGKDCSVLLKDCPVDANSGDPLFLEPFWIRKAEESAVVESGWHRMSYTFNGYGLFMSAELEKIIRKLHNVVGNAVTDNRFIIFGAGATQLLAASVHALSQTNSLSPSRLVTSVPYYNLYKQQADFFNSTNLKFEGDASAWKRSERNDDIKQVIEIVTSPNNPDGKLKRAVLDGPNVKYIHDYAYYWPYFSPITRQADEDLSLFSLSKTTGHAGSRFGWALVKEKTVYEKMKIYISLSSMGVSRDTQLRALQLLKVVIGDGGNEIFRFGYGTLKKRWEILNKIFSMSTRFSLETIKPEYCNYFKKVREFTPSYAWVKCERPEDTDCYEIFKAAKITGRNGEMFGSDERFVRLSLIRSQDDFDQLIAMLKKFVSKEAVVVDSI.

Residues L6–N26 form a helical membrane-spanning segment. Pyridoxal 5'-phosphate-binding positions include Y123, A163–T164, N237, D257–Y260, S280–K283, and R291. At K283 the chain carries N6-(pyridoxal phosphate)lysine.

This sequence belongs to the alliinase family. Pyridoxal 5'-phosphate serves as cofactor.

It is found in the membrane. Functionally, probable aminotransferase. This chain is Tryptophan aminotransferase-related protein 3 (TAR3), found in Arabidopsis thaliana (Mouse-ear cress).